Reading from the N-terminus, the 458-residue chain is Acyl-CoA-binding domain-containing protein 5 (458 aa).

Residues H8–V97 form the ACB domain. An acyl-CoA-binding positions include I19–F28, Y39–K43, K65, and Y84. Disordered regions lie at residues K119–D248 and T296–G369. Positions G125 to N139 are enriched in polar residues. A coiled-coil region spans residues A154–Q188. 3 stretches are compositionally biased toward basic and acidic residues: residues H177–A195, E303–Q313, and T322–S338. Over residues G343 to G356 the composition is skewed to gly residues. Positions E373–S402 form a coiled coil. Residues G430–L450 traverse the membrane as a helical segment.

This sequence belongs to the ATG37 family.

It localises to the peroxisome membrane. Functionally, acyl-CoA binding protein which acts as the peroxisome receptor for pexophagy but is dispensable for aggrephagy and nonselective autophagy. Binds medium- and long-chain acyl-CoA esters. The sequence is that of Acyl-CoA-binding domain-containing protein 5 (acbd5) from Xenopus tropicalis (Western clawed frog).